A 68-amino-acid chain; its full sequence is DNA gyrase inhibitor YacG (68 aa).

Zn(2+) is bound by residues cysteine 12, cysteine 15, cysteine 30, and cysteine 34. A disordered region spans residues 48–68 (KLKTQDAPTSGKGQHSDDYED).

It belongs to the DNA gyrase inhibitor YacG family. Interacts with GyrB. Zn(2+) is required as a cofactor.

In terms of biological role, inhibits all the catalytic activities of DNA gyrase by preventing its interaction with DNA. Acts by binding directly to the C-terminal domain of GyrB, which probably disrupts DNA binding by the gyrase. This chain is DNA gyrase inhibitor YacG, found in Acinetobacter baylyi (strain ATCC 33305 / BD413 / ADP1).